Reading from the N-terminus, the 67-residue chain is Large ribosomal subunit protein bL31 (67 aa).

Cysteine 16, cysteine 18, cysteine 38, and cysteine 41 together coordinate Zn(2+).

It belongs to the bacterial ribosomal protein bL31 family. Type A subfamily. As to quaternary structure, part of the 50S ribosomal subunit. Requires Zn(2+) as cofactor.

In terms of biological role, binds the 23S rRNA. This is Large ribosomal subunit protein bL31 from Thioalkalivibrio sulfidiphilus (strain HL-EbGR7).